A 1215-amino-acid polypeptide reads, in one-letter code: Zinc finger E-box-binding homeobox 2 (1215 aa).

The interval 1–111 (MKQPIMADGP…ILQASVAGPE (111 aa)) is disordered. The segment covering 12–24 (CKRRKQANPRRKN) has biased composition (basic residues). Positions 57–74 (DQDTSPASMPNHESSPHM) are enriched in polar residues. The segment covering 89–98 (RESVVEHSWH) has biased composition (basic and acidic residues). A Phosphoserine modification is found at Ser142. C2H2-type zinc fingers lie at residues 211–234 (LTCP…KYRH), 241–263 (FSCP…MVTH), and 282–304 (FKCT…LRIH). Residues 310–334 (YECPNCKKRFSHSGSYSSHISSKKC) form a C2H2-type 4; atypical zinc finger. Phosphoserine is present on residues Ser356, Ser360, and Ser364. N6-acetyllysine is present on Lys377. Residue Lys391 forms a Glycyl lysine isopeptide (Lys-Gly) (interchain with G-Cter in SUMO); alternate linkage. Lys391 participates in a covalent cross-link: Glycyl lysine isopeptide (Lys-Gly) (interchain with G-Cter in SUMO2); alternate. Positions 437–487 (QHLGVGMEAPLLGFPTMNSNLSEVQKVLQIVDNTVSRQKMDCKTEDISKLK) are SMAD-MH2 binding domain. Glycyl lysine isopeptide (Lys-Gly) (interchain with G-Cter in SUMO2) cross-links involve residues Lys479 and Lys555. Residues 581-605 (FSCQFCKESFPGPIPLHQHERYLCK) form a C2H2-type 5; degenerate zinc finger. Glycyl lysine isopeptide (Lys-Gly) (interchain with G-Cter in SUMO2) cross-links involve residues Lys611 and Lys632. The homeobox; atypical DNA-binding region spans 644–703 (GLTSPINPYKDHMSVLKAYYAMNMEPNSDELLKISIAVGLPQEFVKEWFEQRKVYQYSNS). Ser647 carries the post-translational modification Phosphoserine. Disordered stretches follow at residues 702–740 (NSRS…DSIT) and 772–811 (VDKL…SEEL). A Glycyl lysine isopeptide (Lys-Gly) (interchain with G-Cter in SUMO2) cross-link involves residue Lys713. Ser731 and Ser780 each carry phosphoserine. Over residues 780 to 808 (SNTPSPLNLSSTSSKNSHSSSYTPNSFSS) the composition is skewed to low complexity. Thr782 carries the post-translational modification Phosphothreonine. Ser784 is modified (phosphoserine). Residue Lys866 forms a Glycyl lysine isopeptide (Lys-Gly) (interchain with G-Cter in SUMO); alternate linkage. Lys866 participates in a covalent cross-link: Glycyl lysine isopeptide (Lys-Gly) (interchain with G-Cter in SUMO2); alternate. 2 consecutive C2H2-type zinc fingers follow at residues 999–1021 (YACD…KYEH) and 1027–1049 (HQCQ…SRLH). A C2H2-type 8; atypical zinc finger spans residues 1055-1076 (YQCDKCGKRFSHSGSYSQHMNH). Residues 1117–1215 (TPQGYSDSEE…EEDNMEDGME (99 aa)) are disordered. Ser1122 and Ser1124 each carry phosphoserine. Positions 1127-1149 (RESMPRDGESEKEHEKEGEEGYG) are enriched in basic and acidic residues. Positions 1157–1167 (DEEEEEEEEES) are enriched in acidic residues. Basic and acidic residues-rich tracts occupy residues 1168 to 1179 (ENKSMDTDPETI) and 1186 to 1205 (GDHS…KSDH). Ser1203 is modified (phosphoserine). A compositionally biased stretch (acidic residues) spans 1206–1215 (EEDNMEDGME).

The protein belongs to the delta-EF1/ZFH-1 C2H2-type zinc-finger family. Interacts with CBX4 and CTBP1. Binds activated SMAD1, activated SMAD2 and activated SMAD3; binding with SMAD4 is not detected. Sumoylation on Lys-391 and Lys-866 is promoted by the E3 SUMO-protein ligase CBX4, and impairs interaction with CTBP1 and transcription repression activity.

The protein resides in the nucleus. It is found in the chromosome. Transcriptional inhibitor that binds to DNA sequence 5'-CACCT-3' in different promoters. Represses transcription of E-cadherin. Represses expression of MEOX2. The chain is Zinc finger E-box-binding homeobox 2 (Zeb2) from Mus musculus (Mouse).